We begin with the raw amino-acid sequence, 233 residues long: 5'-methylthioadenosine/S-adenosylhomocysteine nucleosidase (233 aa).

E12 serves as the catalytic Proton acceptor. Substrate-binding positions include G78, I156, and 177–178 (ME). D201 acts as the Proton donor in catalysis.

It belongs to the PNP/UDP phosphorylase family. MtnN subfamily.

It carries out the reaction S-adenosyl-L-homocysteine + H2O = S-(5-deoxy-D-ribos-5-yl)-L-homocysteine + adenine. The catalysed reaction is S-methyl-5'-thioadenosine + H2O = 5-(methylsulfanyl)-D-ribose + adenine. It catalyses the reaction 5'-deoxyadenosine + H2O = 5-deoxy-D-ribose + adenine. It functions in the pathway amino-acid biosynthesis; L-methionine biosynthesis via salvage pathway; S-methyl-5-thio-alpha-D-ribose 1-phosphate from S-methyl-5'-thioadenosine (hydrolase route): step 1/2. Its function is as follows. Catalyzes the irreversible cleavage of the glycosidic bond in both 5'-methylthioadenosine (MTA) and S-adenosylhomocysteine (SAH/AdoHcy) to adenine and the corresponding thioribose, 5'-methylthioribose and S-ribosylhomocysteine, respectively. Also cleaves 5'-deoxyadenosine, a toxic by-product of radical S-adenosylmethionine (SAM) enzymes, into 5-deoxyribose and adenine. In Listeria innocua serovar 6a (strain ATCC BAA-680 / CLIP 11262), this protein is 5'-methylthioadenosine/S-adenosylhomocysteine nucleosidase.